A 72-amino-acid polypeptide reads, in one-letter code: Translation initiation factor IF-1 (72 aa).

In terms of domain architecture, S1-like spans 1–72 (MARDDVIEVD…DRGRITFRYK (72 aa)).

This sequence belongs to the IF-1 family. Component of the 30S ribosomal translation pre-initiation complex which assembles on the 30S ribosome in the order IF-2 and IF-3, IF-1 and N-formylmethionyl-tRNA(fMet); mRNA recruitment can occur at any time during PIC assembly.

The protein resides in the cytoplasm. Functionally, one of the essential components for the initiation of protein synthesis. Stabilizes the binding of IF-2 and IF-3 on the 30S subunit to which N-formylmethionyl-tRNA(fMet) subsequently binds. Helps modulate mRNA selection, yielding the 30S pre-initiation complex (PIC). Upon addition of the 50S ribosomal subunit IF-1, IF-2 and IF-3 are released leaving the mature 70S translation initiation complex. The protein is Translation initiation factor IF-1 of Helicobacter acinonychis (strain Sheeba).